Reading from the N-terminus, the 485-residue chain is Rhamnulokinase (485 aa).

An ATP-binding site is contributed by Ala10–Arg14. Residues Ala78 and His233–Thr235 each bind substrate. Asp234 functions as the Proton acceptor in the catalytic mechanism. Residue Thr256 coordinates ATP. Asn293 lines the substrate pocket. Gln301 contacts ATP. A disulfide bridge connects residues Cys351 and Cys368. Gly400 serves as a coordination point for ATP.

It belongs to the rhamnulokinase family. Requires Mg(2+) as cofactor.

It catalyses the reaction L-rhamnulose + ATP = L-rhamnulose 1-phosphate + ADP + H(+). It functions in the pathway carbohydrate degradation; L-rhamnose degradation; glycerone phosphate from L-rhamnose: step 2/3. Involved in the catabolism of L-rhamnose (6-deoxy-L-mannose). Catalyzes the transfer of the gamma-phosphate group from ATP to the 1-hydroxyl group of L-rhamnulose to yield L-rhamnulose 1-phosphate. The sequence is that of Rhamnulokinase from Bacillus subtilis (strain 168).